We begin with the raw amino-acid sequence, 629 residues long: tRNA uridine 5-carboxymethylaminomethyl modification enzyme MnmG (629 aa).

Residues 13 to 18 (GGGHAG), V125, and S180 each bind FAD. 273-287 (GPRYCPSIEDKVMRF) contributes to the NAD(+) binding site. Q370 provides a ligand contact to FAD.

The protein belongs to the MnmG family. Homodimer. Heterotetramer of two MnmE and two MnmG subunits. The cofactor is FAD.

Its subcellular location is the cytoplasm. In terms of biological role, NAD-binding protein involved in the addition of a carboxymethylaminomethyl (cmnm) group at the wobble position (U34) of certain tRNAs, forming tRNA-cmnm(5)s(2)U34. The polypeptide is tRNA uridine 5-carboxymethylaminomethyl modification enzyme MnmG (Escherichia coli O45:K1 (strain S88 / ExPEC)).